The sequence spans 76 residues: uncharacterized protein (76 aa).

Residues 18-38 (FISALFFFNAVCIVSDNLLII) form a helical membrane-spanning segment.

The protein localises to the cell membrane. This is an uncharacterized protein from Escherichia coli O6:H1 (strain CFT073 / ATCC 700928 / UPEC).